The primary structure comprises 444 residues: Structure-specific endonuclease subunit SLX1 (444 aa).

A GIY-YIG domain is found at 23-105 (AFSCCYLLRS…QNTKVSRHAD (83 aa)). The SLX1-type zinc finger occupies 240-295 (CGVCKQRLILQHDIIAVCSHSSCHCAAHLSCLSSHFLKDKDSDSELVPREGTCPTC). A disordered region spans residues 324-354 (RRQRAGTPKGQGLKSVRGRGHSEDENESDAL).

The protein belongs to the SLX1 family. Forms a heterodimer with SLX4. The cofactor is a divalent metal cation.

Its subcellular location is the nucleus. Functionally, catalytic subunit of the SLX1-SLX4 structure-specific endonuclease that resolves DNA secondary structures generated during DNA repair and recombination. Has endonuclease activity towards branched DNA substrates, introducing single-strand cuts in duplex DNA close to junctions with ss-DNA. The polypeptide is Structure-specific endonuclease subunit SLX1 (Paracoccidioides lutzii (strain ATCC MYA-826 / Pb01) (Paracoccidioides brasiliensis)).